We begin with the raw amino-acid sequence, 428 residues long: Divergent protein kinase domain 1A (428 aa).

At methionine 1–lysine 27 the chain is on the cytoplasmic side. A helical transmembrane segment spans residues tyrosine 28 to serine 48. Residues threonine 49–serine 428 lie on the Lumenal side of the membrane.

It belongs to the DIPK family. Among the many cysteines in the lumenal domain, most are probably involved in disulfide bonds.

The protein resides in the endoplasmic reticulum membrane. This Danio rerio (Zebrafish) protein is Divergent protein kinase domain 1A (dipk1a).